Here is a 1095-residue protein sequence, read N- to C-terminus: Voltage-gated inwardly rectifying potassium channel KCNH3 (1095 aa).

Residues 1-228 (MPAMRGLLAP…HCGALRATWD (228 aa)) lie on the Cytoplasmic side of the membrane. The PAS domain occupies 18–90 (IATRFDGTHS…QQIRKALDEH (73 aa)). Residues 93-145 (FKAELILYRKSGLPFWCLLDVIPIKNEKGEVALFLVSHKDISETKNRGGPDNW) form the PAC domain. A compositionally biased stretch (basic and acidic residues) spans 137–150 (KNRGGPDNWKERGG). The segment at 137 to 161 (KNRGGPDNWKERGGGRRRYGRAGSK) is disordered. A helical membrane pass occupies residues 229-249 (GFILLATLYVAVTVPYSVCVS). At 250–259 (TAREPSAARG) the chain is on the extracellular side. A helical membrane pass occupies residues 260-280 (PPSVCDLAVEVLFILDIVLNF). The Cytoplasmic segment spans residues 281–302 (RTTFVSKSGQVVFAPKSICLHY). Residues 303–323 (VTTWFLLDVIAALPFDLLHAF) traverse the membrane as a helical segment. Residues 324 to 331 (KVNVYVGA) are Extracellular-facing. A helical; Voltage-sensor membrane pass occupies residues 332–352 (HLLKTVRLLRLLRLLPRLDRY). Residues 353 to 361 (SQYSAVVLT) are Cytoplasmic-facing. A helical transmembrane segment spans residues 362–382 (LLMAVFALLAHWVACVWFYIG). Over 383–464 (QQEIESSESE…GGPSLRSAYI (82 aa)) the chain is Extracellular. Positions 417–447 (PDGGNSSGQSENCSSSSSSSGSGGGRGSEAN) are disordered. A compositionally biased stretch (low complexity) spans 419-436 (GGNSSGQSENCSSSSSSS). 3 N-linked (GlcNAc...) asparagine glycosylation sites follow: Asn421, Asn428, and Asn447. The segment at residues 465–485 (TSLYFALSSLTSVGFGNVSAN) is an intramembrane region (pore-forming). Positions 476–481 (SVGFGN) match the Selectivity filter motif. Over 486-490 (TDTEK) the chain is Extracellular. The chain crosses the membrane as a helical span at residues 491-511 (IFSICTMLIGALMHAVVFGNV). Residues 512–1095 (TAIIQRMYAR…QWTQEEGTGV (584 aa)) are Cytoplasmic-facing. Residue 593–708 (LFEAASRGCL…FAPRFSRGLR (116 aa)) coordinates a nucleoside 3',5'-cyclic phosphate. Disordered regions lie at residues 740–823 (EEKE…LPPM), 854–883 (VGQS…PSEA), and 965–1069 (GSVL…PWDP). A compositionally biased stretch (basic residues) spans 784–796 (TAPRPRLGGRGRP). Over residues 857-872 (SGPECSSSPSPGTESG) the composition is skewed to low complexity. Positions 974–991 (HPRPGQPPPLMAPWPWGP) are enriched in pro residues.

Belongs to the potassium channel family. H (Eag) (TC 1.A.1.20) subfamily. Kv12.2/KCNH3 sub-subfamily. In terms of assembly, the potassium channel is probably composed of a homo- or heterotetrameric complex of pore-forming alpha subunits that can associate with modulating beta subunits. Interacts with KCNE1 and KCNE3; these interactions regulate KCNH3 trafficking to the plasma membrane and its subsequent voltage-gated potassium channel activity. Post-translationally, N-glycosylated. N-glycosylation mediates traffick to the cell membrane but is not necessary for voltage-gated potassium channel activity. As to expression, detected in brain, but not in other tissues.

It is found in the cell membrane. The catalysed reaction is K(+)(in) = K(+)(out). Pore-forming (alpha) subunit of a voltage-gated inwardly rectifying potassium channel. Charactherized by a fast rate of activation during depolarization followed by a rapid inactivation at much more depolarized value causing inward rectification due to a C-type inactivation mechanism. Exhibits a rapid recovery from inactivation. In Mus musculus (Mouse), this protein is Voltage-gated inwardly rectifying potassium channel KCNH3.